A 377-amino-acid polypeptide reads, in one-letter code: Succinyl-diaminopimelate desuccinylase (377 aa).

Position 66 (His-66) interacts with Zn(2+). Asp-68 is an active-site residue. Asp-99 serves as a coordination point for Zn(2+). Catalysis depends on Glu-133, which acts as the Proton acceptor. Residues Glu-134, Glu-162, and His-348 each coordinate Zn(2+).

The protein belongs to the peptidase M20A family. DapE subfamily. Homodimer. Zn(2+) serves as cofactor. The cofactor is Co(2+).

It carries out the reaction N-succinyl-(2S,6S)-2,6-diaminopimelate + H2O = (2S,6S)-2,6-diaminopimelate + succinate. It functions in the pathway amino-acid biosynthesis; L-lysine biosynthesis via DAP pathway; LL-2,6-diaminopimelate from (S)-tetrahydrodipicolinate (succinylase route): step 3/3. Catalyzes the hydrolysis of N-succinyl-L,L-diaminopimelic acid (SDAP), forming succinate and LL-2,6-diaminopimelate (DAP), an intermediate involved in the bacterial biosynthesis of lysine and meso-diaminopimelic acid, an essential component of bacterial cell walls. This is Succinyl-diaminopimelate desuccinylase from Methylococcus capsulatus (strain ATCC 33009 / NCIMB 11132 / Bath).